Consider the following 424-residue polypeptide: Tyrosine--tRNA ligase (424 aa).

Tyr36 contacts L-tyrosine. The 'HIGH' region signature appears at 41–50 (PTAPSLHAGH). L-tyrosine contacts are provided by Tyr171 and Gln175. A 'KMSKS' region motif is present at residues 231 to 235 (KFGKS). Residue Lys234 participates in ATP binding. One can recognise an S4 RNA-binding domain in the interval 356 to 413 (DGIVDLLVASGLSASKGAARRTIHEGGVSVNNIRVDNEEWVPQSSDFLHGRWLVLRRG).

Belongs to the class-I aminoacyl-tRNA synthetase family. TyrS type 1 subfamily. In terms of assembly, homodimer.

The protein resides in the cytoplasm. It carries out the reaction tRNA(Tyr) + L-tyrosine + ATP = L-tyrosyl-tRNA(Tyr) + AMP + diphosphate + H(+). Catalyzes the attachment of tyrosine to tRNA(Tyr) in a two-step reaction: tyrosine is first activated by ATP to form Tyr-AMP and then transferred to the acceptor end of tRNA(Tyr). This Mycobacterium bovis (strain ATCC BAA-935 / AF2122/97) protein is Tyrosine--tRNA ligase.